The sequence spans 267 residues: Large ribosomal subunit protein uL3 (267 aa).

The tract at residues 124 to 147 (NQHIGPKSHGGGGGSQPVRQTGSL) is disordered.

It belongs to the universal ribosomal protein uL3 family. Part of the 50S ribosomal subunit. Forms a cluster with proteins L14 and L19.

Its function is as follows. One of the primary rRNA binding proteins, it binds directly near the 3'-end of the 23S rRNA, where it nucleates assembly of the 50S subunit. This Mycoplasmopsis agalactiae (strain NCTC 10123 / CIP 59.7 / PG2) (Mycoplasma agalactiae) protein is Large ribosomal subunit protein uL3.